Here is a 225-residue protein sequence, read N- to C-terminus: Insulin-induced gene 2 protein (225 aa).

Over 1–28 (MAEGETESPGPKKCGPYISSVTSQSVNL) the chain is Cytoplasmic. Residues 29–51 (MIRGVVLFFIGVFLALVLNLLQI) traverse the membrane as a helical segment. Topologically, residues 52–70 (QRNVTLFPPDVIASIFSSA) are lumenal. Residues 71-88 (WWVPPCCGTASAVIGLLY) traverse the membrane as a helical segment. Over 89–103 (PCIDRHLGEPHKFKR) the chain is Cytoplasmic. The chain crosses the membrane as a helical span at residues 104–126 (EWSSVMRCVAVFVGINHASAKVD). At 127 to 129 (FDN) the chain is on the lumenal side. Residues 130 to 148 (NIQLSLTLAALSIGLWWTF) traverse the membrane as a helical segment. Residues 149–153 (DRSRS) lie on the Cytoplasmic side of the membrane. A Phosphoserine modification is found at Ser-151. A helical transmembrane segment spans residues 154 to 175 (GFGLGVGIAFLATLVTQLLVYN). The Lumenal segment spans residues 176 to 189 (GVYQYTSPDFLYVR). A helical transmembrane segment spans residues 190 to 207 (SWLPCIFFAGGITMGNIG). The Cytoplasmic portion of the chain corresponds to 208-225 (RQLAMYECKVIAEKSHQE). Cysteine sulfenic acid (-SOH); alternate is present on Cys-215. A Glycyl cysteine thioester (Cys-Gly) (interchain with G-Cter in ubiquitin); alternate cross-link involves residue Cys-215. The KxHxx motif lies at 219 to 225 (AEKSHQE).

This sequence belongs to the INSIG family. Interacts with SCAP; interaction is direct and only takes place in the presence of sterols; it prevents interaction between SCAP and the coat protein complex II (COPII). Associates with the SCAP-SREBP complex (composed of SCAP and SREBF1/SREBP1 or SREBF2/SREBP2); association is mediated via its interaction with SCAP and only takes place in the presence of sterols. Interacts with RNF139. Interacts with RNF145. In terms of processing, phosphorylation at Ser-151 by PCK1 reduces binding to oxysterol, disrupting the interaction between INSIG2 and SCAP, thereby promoting nuclear translocation of SREBP proteins (SREBF1/SREBP1 or SREBF2/SREBP2) and subsequent transcription of downstream lipogenesis-related genes. Polyubiquitinated by AMFR/gp78 at Cys-215 in some tissues such as adipose tissues, undifferentiated myoblasts and liver, leading to its degradation. In differentiated myotubes, Cys-215 oxidation prevents ubiquitination at the same site, resulting in protein stabilization. Post-translationally, oxidized at Cys-215 in differentiated myotubes, preventing ubiquitination at the same site, and resulting in protein stabilization.

The protein resides in the endoplasmic reticulum membrane. In terms of biological role, oxysterol-binding protein that mediates feedback control of cholesterol synthesis by controlling both endoplasmic reticulum to Golgi transport of SCAP and degradation of HMGCR. Acts as a negative regulator of cholesterol biosynthesis by mediating the retention of the SCAP-SREBP complex in the endoplasmic reticulum, thereby blocking the processing of sterol regulatory element-binding proteins (SREBPs) SREBF1/SREBP1 and SREBF2/SREBP2. Binds oxysterol, including 22-hydroxycholesterol, 24-hydroxycholesterol, 25-hydroxycholesterol and 27-hydroxycholesterol, regulating interaction with SCAP and retention of the SCAP-SREBP complex in the endoplasmic reticulum. In presence of oxysterol, interacts with SCAP, retaining the SCAP-SREBP complex in the endoplasmic reticulum, thereby preventing SCAP from escorting SREBF1/SREBP1 and SREBF2/SREBP2 to the Golgi. Sterol deprivation or phosphorylation by PCK1 reduce oxysterol-binding, disrupting the interaction between INSIG2 and SCAP, thereby promoting Golgi transport of the SCAP-SREBP complex, followed by processing and nuclear translocation of SREBF1/SREBP1 and SREBF2/SREBP2. Also regulates cholesterol synthesis by regulating degradation of HMGCR: initiates the sterol-mediated ubiquitin-mediated endoplasmic reticulum-associated degradation (ERAD) of HMGCR via recruitment of the reductase to the ubiquitin ligase RNF139. The sequence is that of Insulin-induced gene 2 protein from Papio anubis (Olive baboon).